Consider the following 414-residue polypeptide: Serine hydroxymethyltransferase (414 aa).

Residues L121 and 125–127 (GHL) each bind (6S)-5,6,7,8-tetrahydrofolate. An N6-(pyridoxal phosphate)lysine modification is found at K229.

It belongs to the SHMT family. As to quaternary structure, homodimer. Pyridoxal 5'-phosphate is required as a cofactor.

It localises to the cytoplasm. The catalysed reaction is (6R)-5,10-methylene-5,6,7,8-tetrahydrofolate + glycine + H2O = (6S)-5,6,7,8-tetrahydrofolate + L-serine. It functions in the pathway one-carbon metabolism; tetrahydrofolate interconversion. Its pathway is amino-acid biosynthesis; glycine biosynthesis; glycine from L-serine: step 1/1. In terms of biological role, catalyzes the reversible interconversion of serine and glycine with tetrahydrofolate (THF) serving as the one-carbon carrier. This reaction serves as the major source of one-carbon groups required for the biosynthesis of purines, thymidylate, methionine, and other important biomolecules. Also exhibits THF-independent aldolase activity toward beta-hydroxyamino acids, producing glycine and aldehydes, via a retro-aldol mechanism. The sequence is that of Serine hydroxymethyltransferase from Paracidovorax citrulli (strain AAC00-1) (Acidovorax citrulli).